The following is a 111-amino-acid chain: Anti-adapter protein IraM (111 aa).

It belongs to the IraM/RssC family.

Its subcellular location is the cytoplasm. Its function is as follows. Involved in the stabilization of the sigma stress factor RpoS. This chain is Anti-adapter protein IraM, found in Cronobacter sakazakii (strain ATCC BAA-894) (Enterobacter sakazakii).